The chain runs to 380 residues: Septin homolog spn4 (380 aa).

A Septin-type G domain is found at 25–298 (NGVAFTLMLC…EQYRQEQMKV (274 aa)). Residues 35 to 42 (GESGLGKT) form a G1 motif region. Residues 35–42 (GESGLGKT), Thr70, Gly96, 175–183 (KADMYTRRD), Gly231, and Arg247 each bind GTP. The tract at residues 93 to 96 (DTPG) is G3 motif. The interval 174–177 (AKAD) is G4 motif.

This sequence belongs to the TRAFAC class TrmE-Era-EngA-EngB-Septin-like GTPase superfamily. Septin GTPase family. In terms of assembly, component of the septin complex composed of two copies of each spn1, spn2, spn3 and spn4.

The protein localises to the cytoplasm. Its subcellular location is the cell cortex. Plays a role in the cell cycle. Involved in a late stage of septum formation leading to the separation of the daughter cells. In Schizosaccharomyces pombe (strain 972 / ATCC 24843) (Fission yeast), this protein is Septin homolog spn4 (spn4).